The chain runs to 608 residues: Glutamyl-tRNA(Gln) amidotransferase subunit E (608 aa).

A disordered region spans residues Glu-402–Ala-422.

The protein belongs to the GatB/GatE family. GatE subfamily. In terms of assembly, heterodimer of GatD and GatE.

The enzyme catalyses L-glutamyl-tRNA(Gln) + L-glutamine + ATP + H2O = L-glutaminyl-tRNA(Gln) + L-glutamate + ADP + phosphate + H(+). Functionally, allows the formation of correctly charged Gln-tRNA(Gln) through the transamidation of misacylated Glu-tRNA(Gln) in organisms which lack glutaminyl-tRNA synthetase. The reaction takes place in the presence of glutamine and ATP through an activated gamma-phospho-Glu-tRNA(Gln). The GatDE system is specific for glutamate and does not act on aspartate. This chain is Glutamyl-tRNA(Gln) amidotransferase subunit E, found in Pyrobaculum calidifontis (strain DSM 21063 / JCM 11548 / VA1).